The sequence spans 487 residues: Ribulose bisphosphate carboxylase large chain (487 aa).

Substrate-binding residues include Asn127 and Thr177. The active-site Proton acceptor is Lys179. Lys181 contributes to the substrate binding site. 3 residues coordinate Mg(2+): Lys205, Asp207, and Glu208. Position 205 is an N6-carboxylysine (Lys205). His297 (proton acceptor) is an active-site residue. Substrate contacts are provided by Arg298, His330, and Ser382.

Belongs to the RuBisCO large chain family. Type I subfamily. As to quaternary structure, heterohexadecamer of 8 large chains and 8 small chains. The cofactor is Mg(2+).

The enzyme catalyses 2 (2R)-3-phosphoglycerate + 2 H(+) = D-ribulose 1,5-bisphosphate + CO2 + H2O. It catalyses the reaction D-ribulose 1,5-bisphosphate + O2 = 2-phosphoglycolate + (2R)-3-phosphoglycerate + 2 H(+). In terms of biological role, ruBisCO catalyzes two reactions: the carboxylation of D-ribulose 1,5-bisphosphate, the primary event in carbon dioxide fixation, as well as the oxidative fragmentation of the pentose substrate. Both reactions occur simultaneously and in competition at the same active site. The sequence is that of Ribulose bisphosphate carboxylase large chain from Paracoccus denitrificans (strain Pd 1222).